The following is a 123-amino-acid chain: Fluoride-specific ion channel FluC 2 (123 aa).

Transmembrane regions (helical) follow at residues 3-23 (LDGF…RMFI), 38-58 (ILIV…LNIT), 62-82 (LILF…SFIY), and 94-114 (LILL…FCLG). Gly-72 and Ser-75 together coordinate Na(+).

This sequence belongs to the fluoride channel Fluc/FEX (TC 1.A.43) family.

It is found in the cell inner membrane. The enzyme catalyses fluoride(in) = fluoride(out). With respect to regulation, na(+) is not transported, but it plays an essential structural role and its presence is essential for fluoride channel function. Its function is as follows. Fluoride-specific ion channel. Important for reducing fluoride concentration in the cell, thus reducing its toxicity. The chain is Fluoride-specific ion channel FluC 2 from Prochlorococcus marinus subsp. pastoris (strain CCMP1986 / NIES-2087 / MED4).